The following is a 258-amino-acid chain: Regulatory protein RecX (258 aa).

This sequence belongs to the RecX family.

It is found in the cytoplasm. Its function is as follows. Modulates RecA activity. The chain is Regulatory protein RecX from Streptococcus pneumoniae (strain JJA).